The primary structure comprises 555 residues: Glutamate--tRNA ligase (555 aa).

The 'HIGH' region signature appears at 100–110; it reads PNPSGPLHIGH.

The protein belongs to the class-I aminoacyl-tRNA synthetase family. Glutamate--tRNA ligase type 2 subfamily.

The protein localises to the cytoplasm. It catalyses the reaction tRNA(Glu) + L-glutamate + ATP = L-glutamyl-tRNA(Glu) + AMP + diphosphate. In terms of biological role, catalyzes the attachment of glutamate to tRNA(Glu) in a two-step reaction: glutamate is first activated by ATP to form Glu-AMP and then transferred to the acceptor end of tRNA(Glu). This chain is Glutamate--tRNA ligase, found in Methanococcus maripaludis (strain C7 / ATCC BAA-1331).